Here is a 339-residue protein sequence, read N- to C-terminus: Mitochondrial biogenesis regulation protein 1 (339 aa).

Disordered stretches follow at residues 1 to 20 and 94 to 130; these read MRMEKTTDKSLSAGDMNDEY and ELAPSRNGSVSEANSDTNSIASTVHDPVDSKYGGMPS. Positions 99 to 115 are enriched in polar residues; the sequence is RNGSVSEANSDTNSIAS. A Phosphothreonine modification is found at Thr159. Ser177 bears the Phosphoserine mark. Over residues 198 to 213 the composition is skewed to polar residues; the sequence is ETPNSEFSSNSLQHCN. The tract at residues 198–224 is disordered; sequence ETPNSEFSSNSLQHCNSRSFSLPRSRS. Residues 214–224 are compositionally biased toward low complexity; sequence SRSFSLPRSRS. Ser224 and Ser227 each carry phosphoserine. The segment at 258-325 is disordered; sequence ERFSNNRPRE…SKPNFGAGRK (68 aa). Composition is skewed to low complexity over residues 279–293 and 302–314; these read TSSSLSHSNTSSSLN and QFHQPRQPVQQQQ.

The protein belongs to the ISF1/MBR1 family.

The protein resides in the mitochondrion. In terms of biological role, participates in mitochondrial biogenesis and stress response. The protein is Mitochondrial biogenesis regulation protein 1 (MBR1) of Saccharomyces cerevisiae (strain YJM789) (Baker's yeast).